Here is a 202-residue protein sequence, read N- to C-terminus: Holliday junction resolvase RecU (202 aa).

The Mg(2+) site is built by Thr85, Asp87, Glu100, and Gln119.

Belongs to the RecU family. The cofactor is Mg(2+).

The protein localises to the cytoplasm. It carries out the reaction Endonucleolytic cleavage at a junction such as a reciprocal single-stranded crossover between two homologous DNA duplexes (Holliday junction).. Endonuclease that resolves Holliday junction intermediates in genetic recombination. Cleaves mobile four-strand junctions by introducing symmetrical nicks in paired strands. Promotes annealing of linear ssDNA with homologous dsDNA. Required for DNA repair, homologous recombination and chromosome segregation. The sequence is that of Holliday junction resolvase RecU from Streptococcus uberis (strain ATCC BAA-854 / 0140J).